Consider the following 320-residue polypeptide: Methionyl-tRNA formyltransferase (320 aa).

117–120 (SLLP) lines the (6S)-5,6,7,8-tetrahydrofolate pocket.

The protein belongs to the Fmt family.

It carries out the reaction L-methionyl-tRNA(fMet) + (6R)-10-formyltetrahydrofolate = N-formyl-L-methionyl-tRNA(fMet) + (6S)-5,6,7,8-tetrahydrofolate + H(+). Its function is as follows. Attaches a formyl group to the free amino group of methionyl-tRNA(fMet). The formyl group appears to play a dual role in the initiator identity of N-formylmethionyl-tRNA by promoting its recognition by IF2 and preventing the misappropriation of this tRNA by the elongation apparatus. In Bordetella petrii (strain ATCC BAA-461 / DSM 12804 / CCUG 43448), this protein is Methionyl-tRNA formyltransferase.